The primary structure comprises 108 residues: Insulin-1 (108 aa).

A signal peptide spans 1–24; sequence MALLVHFLPLLALLALWEPKPTQA. Disulfide bonds link Cys31–Cys94, Cys43–Cys107, and Cys93–Cys98. The propeptide at 57–85 is c peptide; it reads EVEDPQVEQLELGGSPGDLQTLALEVARQ.

The protein belongs to the insulin family. In terms of assembly, heterodimer of a B chain and an A chain linked by two disulfide bonds.

Its subcellular location is the secreted. Its function is as follows. Insulin decreases blood glucose concentration. It increases cell permeability to monosaccharides, amino acids and fatty acids. It accelerates glycolysis, the pentose phosphate cycle, and glycogen synthesis in liver. The chain is Insulin-1 (Ins1) from Mus musculus (Mouse).